Here is an 872-residue protein sequence, read N- to C-terminus: Alanine--tRNA ligase (872 aa).

The Zn(2+) site is built by His-567, His-571, Cys-669, and His-673.

Belongs to the class-II aminoacyl-tRNA synthetase family. Requires Zn(2+) as cofactor.

The protein resides in the cytoplasm. The catalysed reaction is tRNA(Ala) + L-alanine + ATP = L-alanyl-tRNA(Ala) + AMP + diphosphate. Catalyzes the attachment of alanine to tRNA(Ala) in a two-step reaction: alanine is first activated by ATP to form Ala-AMP and then transferred to the acceptor end of tRNA(Ala). Also edits incorrectly charged Ser-tRNA(Ala) and Gly-tRNA(Ala) via its editing domain. This Streptococcus pyogenes serotype M2 (strain MGAS10270) protein is Alanine--tRNA ligase.